The sequence spans 284 residues: MKLVIVSGRSGSGKSVALRVLEDLGYYCVDNLPLPLIGSLLEQLKGSNDLVAISVDVRNLPEQDKVLVKQLTSLPEGTELTSFFLNSSDKVLLKRYSETRRLHPLSKSRVSLQEAIKLEGKLLEPLSQQMDHYIDTSNLNIYELSDQVRQILLGSVDKELVINFESFGFKHGMPTEADFMFDVRFLPNPHWEPELRPLTGLDEPVAEFLNRQPLVNKFIWQIENLLETWLPHLERNNRSYLTIAIGCTGGQHRSVYVAEQLAKRFSNGKHKVNARHRELSHAKA.

Position 8–15 (8–15 (GRSGSGKS)) interacts with ATP. 56-59 (DVRN) provides a ligand contact to GTP.

The protein belongs to the RapZ-like family.

Functionally, displays ATPase and GTPase activities. This chain is Nucleotide-binding protein Shewmr4_0670, found in Shewanella sp. (strain MR-4).